The primary structure comprises 158 residues: RING-H2 finger protein ATL66 (158 aa).

Residues 33–53 form a helical membrane-spanning segment; that stretch reads LFFALALFSVVLFFALLTLYI. Residues 107-149 form an RING-type; atypical zinc finger; the sequence is CCICLGGFEEGEKMKVLPPCSHCYHCECVDRWLKTESSCPLCR.

This sequence belongs to the RING-type zinc finger family. ATL subfamily.

The protein resides in the membrane. It catalyses the reaction S-ubiquitinyl-[E2 ubiquitin-conjugating enzyme]-L-cysteine + [acceptor protein]-L-lysine = [E2 ubiquitin-conjugating enzyme]-L-cysteine + N(6)-ubiquitinyl-[acceptor protein]-L-lysine.. The protein operates within protein modification; protein ubiquitination. The sequence is that of RING-H2 finger protein ATL66 (ATL66) from Arabidopsis thaliana (Mouse-ear cress).